Consider the following 509-residue polypeptide: Histidine ammonia-lyase (509 aa).

Positions 142–144 (ASG) form a cross-link, 5-imidazolinone (Ala-Gly). Residue Ser143 is modified to 2,3-didehydroalanine (Ser).

This sequence belongs to the PAL/histidase family. Contains an active site 4-methylidene-imidazol-5-one (MIO), which is formed autocatalytically by cyclization and dehydration of residues Ala-Ser-Gly.

The protein resides in the cytoplasm. The catalysed reaction is L-histidine = trans-urocanate + NH4(+). It participates in amino-acid degradation; L-histidine degradation into L-glutamate; N-formimidoyl-L-glutamate from L-histidine: step 1/3. This Pseudomonas aeruginosa (strain UCBPP-PA14) protein is Histidine ammonia-lyase.